A 37-amino-acid polypeptide reads, in one-letter code: Cytochrome b6-f complex subunit 5 (37 aa).

The helical transmembrane segment at 5–25 (LLFGIVLGLIPVTLVGLFVAA) threads the bilayer.

The protein belongs to the PetG family. In terms of assembly, the 4 large subunits of the cytochrome b6-f complex are cytochrome b6, subunit IV (17 kDa polypeptide, PetD), cytochrome f and the Rieske protein, while the 4 small subunits are PetG, PetL, PetM and PetN. The complex functions as a dimer.

The protein resides in the plastid. The protein localises to the chloroplast thylakoid membrane. In terms of biological role, component of the cytochrome b6-f complex, which mediates electron transfer between photosystem II (PSII) and photosystem I (PSI), cyclic electron flow around PSI, and state transitions. PetG is required for either the stability or assembly of the cytochrome b6-f complex. In Rhodomonas salina (Cryptomonas salina), this protein is Cytochrome b6-f complex subunit 5.